The following is a 280-amino-acid chain: Shikimate kinase (280 aa).

Residue 74-84 participates in ATP binding; the sequence is PGGSGLGSSSA.

It belongs to the GHMP kinase family. Archaeal shikimate kinase subfamily.

Its subcellular location is the cytoplasm. It carries out the reaction shikimate + ATP = 3-phosphoshikimate + ADP + H(+). It participates in metabolic intermediate biosynthesis; chorismate biosynthesis; chorismate from D-erythrose 4-phosphate and phosphoenolpyruvate: step 5/7. In Archaeoglobus fulgidus (strain ATCC 49558 / DSM 4304 / JCM 9628 / NBRC 100126 / VC-16), this protein is Shikimate kinase (aroK).